Consider the following 200-residue polypeptide: NADH-quinone oxidoreductase subunit C (200 aa).

The protein belongs to the complex I 30 kDa subunit family. NDH-1 is composed of 14 different subunits. Subunits NuoB, C, D, E, F, and G constitute the peripheral sector of the complex.

Its subcellular location is the cell inner membrane. It catalyses the reaction a quinone + NADH + 5 H(+)(in) = a quinol + NAD(+) + 4 H(+)(out). In terms of biological role, NDH-1 shuttles electrons from NADH, via FMN and iron-sulfur (Fe-S) centers, to quinones in the respiratory chain. The immediate electron acceptor for the enzyme in this species is believed to be ubiquinone. Couples the redox reaction to proton translocation (for every two electrons transferred, four hydrogen ions are translocated across the cytoplasmic membrane), and thus conserves the redox energy in a proton gradient. This chain is NADH-quinone oxidoreductase subunit C, found in Parvibaculum lavamentivorans (strain DS-1 / DSM 13023 / NCIMB 13966).